The primary structure comprises 537 residues: Cytochrome P450 734A5 (537 aa).

A helical membrane pass occupies residues 13-33; it reads GAAAVAVAAAAAWVAVYAAAA. Cys480 is a heme binding site.

It belongs to the cytochrome P450 family. It depends on heme as a cofactor. As to expression, exclusively expressed in roots.

Its subcellular location is the membrane. Its function is as follows. Cytochrome P450 probably involved in brassinosteroids (BRs) inactivation and regulation of BRs homeostasis. The polypeptide is Cytochrome P450 734A5 (CYP734A5) (Oryza sativa subsp. japonica (Rice)).